We begin with the raw amino-acid sequence, 752 residues long: Complement C2 (752 aa).

The first 20 residues, 1-20, serve as a signal peptide directing secretion; sequence MGPLMVLFCLLFLYPGLADS. Sushi domains follow at residues 22–86, 87–146, and 149–206; these read PSCP…VCKP, VRCP…VCDN, and GHCP…ICRQ. Disulfide bonds link cysteine 24–cysteine 64, cysteine 51–cysteine 84, cysteine 89–cysteine 131, cysteine 117–cysteine 144, cysteine 151–cysteine 191, and cysteine 177–cysteine 204. Asparagine 29 is a glycosylation site (N-linked (GlcNAc...) asparagine). Asparagine 112 is a glycosylation site (N-linked (GlcNAc...) asparagine). Residues 254–452 enclose the VWFA domain; it reads NLYLLLDCSQ…KALHQVFEHM (199 aa). Positions 260–264 match the MIDAS-like motif motif; that stretch reads DCSQS. Serine 262 and serine 264 together coordinate Mg(2+). Serine 262 and serine 264 together coordinate Mn(2+). N-linked (GlcNAc...) asparagine glycans are attached at residues asparagine 290 and asparagine 333. Position 337 (threonine 337) interacts with Mg(2+). Threonine 337 is a binding site for Mn(2+). 3 cysteine pairs are disulfide-bonded: cysteine 463–cysteine 581, cysteine 492–cysteine 508, and cysteine 584–cysteine 600. A Peptidase S1 domain is found at 464–744; that stretch reads GVGNMSANAS…MQPWLRQHLG (281 aa). Asparagine 467 and asparagine 471 each carry an N-linked (GlcNAc...) asparagine glycan. Active-site charge relay system residues include histidine 507 and aspartate 561. Asparagine 621 is a glycosylation site (N-linked (GlcNAc...) asparagine). Intrachain disulfides connect cysteine 638-cysteine 665 and cysteine 675-cysteine 705. An N-linked (GlcNAc...) (complex) asparagine glycan is attached at asparagine 651. Serine 679 acts as the Charge relay system in catalysis.

It belongs to the peptidase S1 family. Serine protease component of the C3 convertase, also named C4bC2b, composed of the serine protease complement C2b and complement C4b. Serine protease component of the C5 convertase, also named C4bC2bC3b, composed of the serine protease complement C2b, complement C3b, as well as complement C4b. As to quaternary structure, (Microbial infection) Interacts with Schistosoma haematobium TOR (via N-terminal extracellular domain). This results in inhibition of the classical and lectin pathway of complement activation, probably due to interference with binding of C2a to C4b such that C3 convertase cannot be formed. This infers resistance to complement-mediated cell lysis, allowing parasite survival and infection. It depends on Mg(2+) as a cofactor. Mn(2+) serves as cofactor. Cleaved and activated by different proteases depending on the complement pathway to generate complement C2a and serine protease complement C2b chains. Cleaved and activated by C1S following activation by the classical complement system. Cleaved and activated by MASP2 following activation by the lectin complement system. Cleaved and activated by GZMK following activation by the GZMK complement system.

The protein localises to the secreted. It is found in the cell surface. It carries out the reaction Selective cleavage of Arg-|-Ser bond in complement component C3 alpha-chain to form C3a and C3b, and Arg-|-Xaa bond in complement component C5 alpha-chain to form C5a and C5b.. In terms of biological role, precursor of the catalytic component of the C3 and C5 convertase complexes, which are part of the complement pathway, a cascade of proteins that leads to phagocytosis and breakdown of pathogens and signaling that strengthens the adaptive immune system. Component C2 is part of the classical, lectin and GZMK complement systems. Catalytic component of the complement C3 and C5 convertase complexes. Following complement activation, recruited to the surface of pathogens by complement C4b opsonin to form the C3 convertase, or C3b and C4b opsonins to form the C5 convertase. As part of the C3 convertase, cleaves and activate C3 into C3a anaphylatoxin and C3b opsonin, the next components of the complement pathways. As part of the C5 convertase, cleaves and activate C5 into C5a anaphylatoxin and C5b component of the membrane attack complex. The chain is Complement C2 from Homo sapiens (Human).